A 307-amino-acid chain; its full sequence is UDP-3-O-acyl-N-acetylglucosamine deacetylase (307 aa).

Zn(2+) is bound by residues His-78, His-241, and Asp-245. His-268 (proton donor) is an active-site residue.

The protein belongs to the LpxC family. Zn(2+) is required as a cofactor.

The enzyme catalyses a UDP-3-O-[(3R)-3-hydroxyacyl]-N-acetyl-alpha-D-glucosamine + H2O = a UDP-3-O-[(3R)-3-hydroxyacyl]-alpha-D-glucosamine + acetate. Its pathway is glycolipid biosynthesis; lipid IV(A) biosynthesis; lipid IV(A) from (3R)-3-hydroxytetradecanoyl-[acyl-carrier-protein] and UDP-N-acetyl-alpha-D-glucosamine: step 2/6. In terms of biological role, catalyzes the hydrolysis of UDP-3-O-myristoyl-N-acetylglucosamine to form UDP-3-O-myristoylglucosamine and acetate, the committed step in lipid A biosynthesis. In Paracidovorax citrulli (strain AAC00-1) (Acidovorax citrulli), this protein is UDP-3-O-acyl-N-acetylglucosamine deacetylase.